The primary structure comprises 517 residues: Bifunctional purine biosynthesis protein PurH (517 aa).

One can recognise an MGS-like domain in the interval 1–146 (MAPIALLSVS…KNHAHVAVLT (146 aa)).

This sequence belongs to the PurH family.

It catalyses the reaction (6R)-10-formyltetrahydrofolate + 5-amino-1-(5-phospho-beta-D-ribosyl)imidazole-4-carboxamide = 5-formamido-1-(5-phospho-D-ribosyl)imidazole-4-carboxamide + (6S)-5,6,7,8-tetrahydrofolate. It carries out the reaction IMP + H2O = 5-formamido-1-(5-phospho-D-ribosyl)imidazole-4-carboxamide. It functions in the pathway purine metabolism; IMP biosynthesis via de novo pathway; 5-formamido-1-(5-phospho-D-ribosyl)imidazole-4-carboxamide from 5-amino-1-(5-phospho-D-ribosyl)imidazole-4-carboxamide (10-formyl THF route): step 1/1. Its pathway is purine metabolism; IMP biosynthesis via de novo pathway; IMP from 5-formamido-1-(5-phospho-D-ribosyl)imidazole-4-carboxamide: step 1/1. This chain is Bifunctional purine biosynthesis protein PurH, found in Prochlorococcus marinus (strain MIT 9313).